The sequence spans 295 residues: Aspartate carbamoyltransferase catalytic subunit (295 aa).

The carbamoyl phosphate site is built by R54 and T55. K82 lines the L-aspartate pocket. Residues R104, H132, and Q135 each contribute to the carbamoyl phosphate site. L-aspartate-binding residues include R165 and R218. 2 residues coordinate carbamoyl phosphate: G257 and P258.

Belongs to the aspartate/ornithine carbamoyltransferase superfamily. ATCase family. In terms of assembly, heterododecamer (2C3:3R2) of six catalytic PyrB chains organized as two trimers (C3), and six regulatory PyrI chains organized as three dimers (R2).

The enzyme catalyses carbamoyl phosphate + L-aspartate = N-carbamoyl-L-aspartate + phosphate + H(+). Its pathway is pyrimidine metabolism; UMP biosynthesis via de novo pathway; (S)-dihydroorotate from bicarbonate: step 2/3. Catalyzes the condensation of carbamoyl phosphate and aspartate to form carbamoyl aspartate and inorganic phosphate, the committed step in the de novo pyrimidine nucleotide biosynthesis pathway. This Wolbachia pipientis wMel protein is Aspartate carbamoyltransferase catalytic subunit.